The sequence spans 156 residues: SsrA-binding protein (156 aa).

This sequence belongs to the SmpB family.

It localises to the cytoplasm. Required for rescue of stalled ribosomes mediated by trans-translation. Binds to transfer-messenger RNA (tmRNA), required for stable association of tmRNA with ribosomes. tmRNA and SmpB together mimic tRNA shape, replacing the anticodon stem-loop with SmpB. tmRNA is encoded by the ssrA gene; the 2 termini fold to resemble tRNA(Ala) and it encodes a 'tag peptide', a short internal open reading frame. During trans-translation Ala-aminoacylated tmRNA acts like a tRNA, entering the A-site of stalled ribosomes, displacing the stalled mRNA. The ribosome then switches to translate the ORF on the tmRNA; the nascent peptide is terminated with the 'tag peptide' encoded by the tmRNA and targeted for degradation. The ribosome is freed to recommence translation, which seems to be the essential function of trans-translation. In Staphylococcus haemolyticus (strain JCSC1435), this protein is SsrA-binding protein.